Reading from the N-terminus, the 402-residue chain is Pentalenic acid synthase (402 aa).

The segment at M1–Y28 is disordered. C351 contributes to the heme binding site.

This sequence belongs to the cytochrome P450 family. Requires heme as cofactor.

The enzyme catalyses 1-deoxypentalenate + reduced 2[4Fe-4S]-[ferredoxin] + O2 + 2 H(+) = pentalenate + oxidized 2[4Fe-4S]-[ferredoxin] + H2O. It participates in antibiotic biosynthesis; neopentalenolactone biosynthesis. Functionally, catalyzes the conversion of 1-deoxypentalenic acid to pentalenic acid in the biosynthesis of neopentalenolactone antibiotic. This Streptomyces avermitilis (strain ATCC 31267 / DSM 46492 / JCM 5070 / NBRC 14893 / NCIMB 12804 / NRRL 8165 / MA-4680) protein is Pentalenic acid synthase (cyp28).